Reading from the N-terminus, the 257-residue chain is MAPKDVRALIREGKINGPTAGMSGGYAQANLVVLKKDLAFDFLLFCQRNQKPCPVLDVTEAGSPVPSLAAPDADIRTDFPKYRIYRHGILTEEVSDITPYWEDDFVGFLIGCSFSFEQALINNGIAVRHIDEGTNVSMYKTNIDCVPAGAFHGQMVVSMRPVPERLAVRAAQVTSRFPAVHGGPIHIGNPGAIGIRDLGKPDFGDAVSIRDGEVPVFWACGVTPQAVAMNVKPEMVITHAPGHMLITDIRDESLAVL.

Belongs to the D-glutamate cyclase family.

The chain is Putative hydro-lyase YcsI (ycsI) from Bacillus subtilis (strain 168).